The primary structure comprises 92 residues: UPF0223 protein SPy_1248/M5005_Spy0958 (92 aa).

Belongs to the UPF0223 family.

This chain is UPF0223 protein SPy_1248/M5005_Spy0958, found in Streptococcus pyogenes serotype M1.